Here is a 119-residue protein sequence, read N- to C-terminus: Large ribosomal subunit protein uL22 (119 aa).

The protein belongs to the universal ribosomal protein uL22 family. As to quaternary structure, part of the 50S ribosomal subunit.

Functionally, this protein binds specifically to 23S rRNA; its binding is stimulated by other ribosomal proteins, e.g. L4, L17, and L20. It is important during the early stages of 50S assembly. It makes multiple contacts with different domains of the 23S rRNA in the assembled 50S subunit and ribosome. Its function is as follows. The globular domain of the protein is located near the polypeptide exit tunnel on the outside of the subunit, while an extended beta-hairpin is found that lines the wall of the exit tunnel in the center of the 70S ribosome. The protein is Large ribosomal subunit protein uL22 of Bifidobacterium longum (strain DJO10A).